Here is a 428-residue protein sequence, read N- to C-terminus: Beta-1,3-galactosyl-O-glycosyl-glycoprotein beta-1,6-N-acetylglucosaminyltransferase (428 aa).

The Cytoplasmic segment spans residues 1–9; the sequence is MLRTLLRRR. The tract at residues 5–9 is mediates interaction with GOLPH3 and is necessary and sufficient for localization to the Golgi; sequence LLRRR. A helical; Signal-anchor for type II membrane protein membrane pass occupies residues 10 to 32; that stretch reads LFSYPTKYYFMVLVLSLITFSVL. The tract at residues 33–121 is stem region; it reads RIHQKPEFVS…EPLSKEEAEF (89 aa). Over 33–428 the chain is Lumenal; that stretch reads RIHQKPEFVS…RHKALETLKH (396 aa). N-linked (GlcNAc...) asparagine glycans are attached at residues asparagine 58 and asparagine 95. Intrachain disulfides connect cysteine 59–cysteine 413, cysteine 100–cysteine 172, cysteine 151–cysteine 199, and cysteine 372–cysteine 381. Residues 122–428 are catalytic; sequence PIAYSIVVHH…RHKALETLKH (307 aa). UDP-N-acetyl-alpha-D-glucosamine is bound by residues 128-130, 155-157, and tyrosine 187; these read VVH and DTK. 6 residues coordinate a glycoprotein: glutamate 243, lysine 251, arginine 254, glutamate 320, lysine 341, and tyrosine 358. Catalysis depends on glutamate 320, which acts as the Nucleophile. Residues arginine 378 and lysine 401 each contribute to the UDP-N-acetyl-alpha-D-glucosamine site.

It belongs to the glycosyltransferase 14 family. Interacts with GOLPH3; may control GCNT1 retention in the Golgi. As to expression, highly expressed in activated T-lymphocytes and myeloid cells.

The protein localises to the golgi apparatus membrane. The enzyme catalyses a 3-O-[beta-D-galactosyl-(1-&gt;3)-N-acetyl-alpha-D-galactosaminyl]-L-seryl-[protein] + UDP-N-acetyl-alpha-D-glucosamine = 3-O-{beta-D-galactosyl-(1-&gt;3)-[N-acetyl-beta-D-glucosaminyl-(1-&gt;6)]-N-acetyl-alpha-D-galactosaminyl}-L-seryl-[protein] + UDP + H(+). It catalyses the reaction a 3-O-[beta-D-galactosyl-(1-&gt;3)-N-acetyl-alpha-D-galactosaminyl]-L-threonyl-[protein] + UDP-N-acetyl-alpha-D-glucosamine = a 3-O-{beta-D-galactosyl-(1-&gt;3)-[N-acetyl-beta-D-glucosaminyl-(1-&gt;6)]-N-acetyl-alpha-D-galactosaminyl}-L-threonyl-[protein] + UDP + H(+). It carries out the reaction a globoside GalGb4Cer + UDP-N-acetyl-alpha-D-glucosamine = a globoside GlcNAc-(beta1-&gt;6)-GalGb4Cer + UDP + H(+). The catalysed reaction is a ganglioside GA1 + UDP-N-acetyl-alpha-D-glucosamine = a ganglioside beta-D-GlcNAc-(1-&gt;6)-GA1 + UDP + H(+). Its pathway is protein modification; protein glycosylation. It functions in the pathway glycolipid biosynthesis. Glycosyltransferase that catalyzes the transfer of an N-acetylglucosamine (GlcNAc) moiety in beta1-6 linkage from UDP-GlcNAc onto mucin-type core 1 O-glycan to form the branched mucin-type core 2 O-glycan. The catalysis is metal ion-independent and occurs with inversion of the anomeric configuration of sugar donor. Selectively involved in synthesis of mucin-type core 2 O-glycans that serve as scaffolds for the display of selectin ligand sialyl Lewis X epitope by myeloid cells, with an impact on homeostasis and recruitment to inflammatory sites. Can also act on glycolipid substrates. Transfers GlcNAc moiety to GalGb4Cer globosides in a reaction step to the synthesis of stage-specific embryonic antigen 1 (SSEA-1) determinant. Can use Galbeta1-3GalNAcalpha1- and Galbeta1-3GalNAcbeta1- oligosaccharide derivatives as acceptor substrates. The chain is Beta-1,3-galactosyl-O-glycosyl-glycoprotein beta-1,6-N-acetylglucosaminyltransferase (GCNT1) from Homo sapiens (Human).